The sequence spans 600 residues: MTKLTRFSVAPLHAMTRRLADVASGRVAPEFVITGARVLSTYSERILPNRELWITGGRVAAVKPAGAHKALGGGFAIYDAADGIIAPGLVDPHIHIESSMVTACAYAEAALLNGTTTIFCDSHEIGNVMDVAGVEAMLEDARQAPLSIFLTVPSTVPATSAALETAGGDLTPDKIADLFDRWPEAVALGEKMDFVPVCMGDERSHAILAAALQRGRPVSGHVYGREFVAAYAASGVTDTHEAIDRDIADDLLDAGVWIFLRGGPPTTPWHSLPQAIRTITELGASHKRTAVCTDDRDADDLMLFGLDWVVREAVKAGMSPEQAWSMGSLHGATRFAMDGEIGGLGGGRRADLVLLDDGLKPQSTWYGGELVVENGKITPRLDQALSQRYQYPKAAYATVKLPAQVKLTPELPTKACTVNAIKTALPGITLIHDKVAIAPASDWPTLFARHGLCFVAVIERHGKSAGNVAHGLLKDFGLTRGAVASSVGHDSHNIIVAGTNEADMQVAVAAIGSHQGGVCVVADGKVRAMVPLPIAGLLSDKRITEVAEEVKLLKTEWAAAGCTIPYMGFNLIPLSVIPEIRITDKGLVLVPQMELTPLFE.

It belongs to the metallo-dependent hydrolases superfamily. Adenine deaminase family. Mn(2+) serves as cofactor.

The catalysed reaction is adenine + H2O + H(+) = hypoxanthine + NH4(+). The sequence is that of Adenine deaminase from Bradyrhizobium sp. (strain BTAi1 / ATCC BAA-1182).